We begin with the raw amino-acid sequence, 203 residues long: Dephospho-CoA kinase (203 aa).

The region spanning Lys-6–Ile-203 is the DPCK domain. Ser-14–Ser-19 serves as a coordination point for ATP.

Belongs to the CoaE family.

It is found in the cytoplasm. The enzyme catalyses 3'-dephospho-CoA + ATP = ADP + CoA + H(+). It functions in the pathway cofactor biosynthesis; coenzyme A biosynthesis; CoA from (R)-pantothenate: step 5/5. Functionally, catalyzes the phosphorylation of the 3'-hydroxyl group of dephosphocoenzyme A to form coenzyme A. This Protochlamydia amoebophila (strain UWE25) protein is Dephospho-CoA kinase.